Reading from the N-terminus, the 118-residue chain is Putative pterin-4-alpha-carbinolamine dehydratase (118 aa).

The protein belongs to the pterin-4-alpha-carbinolamine dehydratase family.

It carries out the reaction (4aS,6R)-4a-hydroxy-L-erythro-5,6,7,8-tetrahydrobiopterin = (6R)-L-erythro-6,7-dihydrobiopterin + H2O. The chain is Putative pterin-4-alpha-carbinolamine dehydratase from Azotobacter vinelandii (strain DJ / ATCC BAA-1303).